A 335-amino-acid polypeptide reads, in one-letter code: Solute-binding protein Veis_3954 (335 aa).

Positions 1–34 (MPSTRPLPRPSSRSLRRLALGLGLAFGLGATAAA) are cleaved as a signal peptide. Residues Q50, E82, 155–158 (NGFR), R179, and N219 contribute to the (R)-pantoate site.

Belongs to the bacterial solute-binding protein 7 family. The complex is comprised of an extracytoplasmic solute-binding protein and a heteromeric permease formed by two transmembrane proteins.

It localises to the periplasm. In terms of biological role, solute-binding protein that binds (R)-pantoate and D-erythronate (in vitro). Probably part of a tripartite ATP-independent periplasmic (TRAP) transport system that mediates solute transport into the cytoplasm. In Verminephrobacter eiseniae (strain EF01-2), this protein is Solute-binding protein Veis_3954.